The sequence spans 282 residues: U1 small nuclear ribonucleoprotein A (282 aa).

2 consecutive RRM domains span residues Asn10–Thr89 and His208–Lys282.

It belongs to the RRM U1 A/B'' family. U1 snRNP is composed of the 7 core Sm proteins snrpb, snrpd1, snrpd2, snrpd3, snrpe, snrpf and snrpg that assemble in a heptameric protein ring on the Sm site of the small nuclear RNA to form the core snRNP, and at least three U1 snRNP-specific proteins snrnp70/U1-70K, snrpa/U1-A and snrpc/U1-C.

It localises to the nucleus. Functionally, component of the spliceosomal U1 snRNP, which is essential for recognition of the pre-mRNA 5' splice-site and the subsequent assembly of the spliceosome. U1 snRNP is the first snRNP to interact with pre-mRNA. This interaction is required for the subsequent binding of U2 snRNP and the U4/U6/U5 tri-snRNP. Snrpa binds stem loop II of U1 snRNA. The protein is U1 small nuclear ribonucleoprotein A (snrpa) of Xenopus laevis (African clawed frog).